We begin with the raw amino-acid sequence, 848 residues long: Heat shock protein 70 homolog lhs1 (848 aa).

The signal sequence occupies residues 1 to 21 (MKRSVLTIILFFSCQFWHAFA). N-linked (GlcNAc...) asparagine glycans are attached at residues asparagine 134, asparagine 247, asparagine 359, asparagine 457, asparagine 462, asparagine 488, asparagine 555, asparagine 632, asparagine 678, asparagine 733, and asparagine 817. Positions 784 to 848 (KLKAKKGASS…QQEIDDSDEL (65 aa)) are disordered. Composition is skewed to polar residues over residues 807-822 (TNDI…TSTQ) and 829-840 (ASVTQRPSSLQQ). The short motif at 845-848 (SDEL) is the Prevents secretion from ER element.

This sequence belongs to the heat shock protein 70 family.

It localises to the endoplasmic reticulum lumen. It catalyses the reaction ATP + H2O = ADP + phosphate + H(+). Functionally, chaperone required for protein translocation and folding in the endoplasmic reticulum. This is Heat shock protein 70 homolog lhs1 from Schizosaccharomyces pombe (strain 972 / ATCC 24843) (Fission yeast).